Consider the following 365-residue polypeptide: tRNA/tmRNA (uracil-C(5))-methyltransferase (365 aa).

Residues Q189, Y217, N222, E238, and D298 each coordinate S-adenosyl-L-methionine. C323 (nucleophile) is an active-site residue. The active-site Proton acceptor is the E357.

Belongs to the class I-like SAM-binding methyltransferase superfamily. RNA M5U methyltransferase family. TrmA subfamily.

The enzyme catalyses uridine(54) in tRNA + S-adenosyl-L-methionine = 5-methyluridine(54) in tRNA + S-adenosyl-L-homocysteine + H(+). It carries out the reaction uridine(341) in tmRNA + S-adenosyl-L-methionine = 5-methyluridine(341) in tmRNA + S-adenosyl-L-homocysteine + H(+). Functionally, dual-specificity methyltransferase that catalyzes the formation of 5-methyluridine at position 54 (m5U54) in all tRNAs, and that of position 341 (m5U341) in tmRNA (transfer-mRNA). The protein is tRNA/tmRNA (uracil-C(5))-methyltransferase of Saccharophagus degradans (strain 2-40 / ATCC 43961 / DSM 17024).